A 172-amino-acid chain; its full sequence is 3-hydroxydecanoyl-[acyl-carrier-protein] dehydratase (172 aa).

Residue His71 is part of the active site.

The protein belongs to the thioester dehydratase family. FabA subfamily. Homodimer.

The protein resides in the cytoplasm. It catalyses the reaction a (3R)-hydroxyacyl-[ACP] = a (2E)-enoyl-[ACP] + H2O. The catalysed reaction is (3R)-hydroxydecanoyl-[ACP] = (2E)-decenoyl-[ACP] + H2O. The enzyme catalyses (2E)-decenoyl-[ACP] = (3Z)-decenoyl-[ACP]. It functions in the pathway lipid metabolism; fatty acid biosynthesis. Necessary for the introduction of cis unsaturation into fatty acids. Catalyzes the dehydration of (3R)-3-hydroxydecanoyl-ACP to E-(2)-decenoyl-ACP and then its isomerization to Z-(3)-decenoyl-ACP. Can catalyze the dehydratase reaction for beta-hydroxyacyl-ACPs with saturated chain lengths up to 16:0, being most active on intermediate chain length. This is 3-hydroxydecanoyl-[acyl-carrier-protein] dehydratase from Escherichia coli O6:K15:H31 (strain 536 / UPEC).